The primary structure comprises 138 residues: Small ribosomal subunit protein uS11c (138 aa).

Residues 1-21 form a disordered region; it reads MAKSIPKIGSRKTGRIGSRKH. Positions 9 to 21 are enriched in basic residues; that stretch reads GSRKTGRIGSRKH.

This sequence belongs to the universal ribosomal protein uS11 family. In terms of assembly, part of the 30S ribosomal subunit.

It is found in the plastid. It localises to the chloroplast. In Pisum sativum (Garden pea), this protein is Small ribosomal subunit protein uS11c.